The chain runs to 126 residues: S-adenosylmethionine decarboxylase proenzyme (126 aa).

Serine 63 functions as the Schiff-base intermediate with substrate; via pyruvic acid in the catalytic mechanism. Serine 63 is modified (pyruvic acid (Ser); by autocatalysis). The active-site Proton acceptor; for processing activity is the histidine 68. Residue cysteine 83 is the Proton donor; for catalytic activity of the active site.

It belongs to the prokaryotic AdoMetDC family. Type 1 subfamily. Heterotetramer of two alpha and two beta chains arranged as a dimer of alpha/beta heterodimers. Requires pyruvate as cofactor. Is synthesized initially as an inactive proenzyme. Formation of the active enzyme involves a self-maturation process in which the active site pyruvoyl group is generated from an internal serine residue via an autocatalytic post-translational modification. Two non-identical subunits are generated from the proenzyme in this reaction, and the pyruvate is formed at the N-terminus of the alpha chain, which is derived from the carboxyl end of the proenzyme. The post-translation cleavage follows an unusual pathway, termed non-hydrolytic serinolysis, in which the side chain hydroxyl group of the serine supplies its oxygen atom to form the C-terminus of the beta chain, while the remainder of the serine residue undergoes an oxidative deamination to produce ammonia and the pyruvoyl group blocking the N-terminus of the alpha chain.

It carries out the reaction S-adenosyl-L-methionine + H(+) = S-adenosyl 3-(methylsulfanyl)propylamine + CO2. It participates in amine and polyamine biosynthesis; S-adenosylmethioninamine biosynthesis; S-adenosylmethioninamine from S-adenosyl-L-methionine: step 1/1. Functionally, catalyzes the decarboxylation of S-adenosylmethionine to S-adenosylmethioninamine (dcAdoMet), the propylamine donor required for the synthesis of the polyamines spermine and spermidine from the diamine putrescine. The chain is S-adenosylmethionine decarboxylase proenzyme from Oceanobacillus iheyensis (strain DSM 14371 / CIP 107618 / JCM 11309 / KCTC 3954 / HTE831).